Reading from the N-terminus, the 345-residue chain is Quinolinate synthase (345 aa).

The iminosuccinate site is built by H69 and S87. C132 provides a ligand contact to [4Fe-4S] cluster. Iminosuccinate-binding positions include 158–160 (YVN) and S175. [4Fe-4S] cluster is bound at residue C217. Iminosuccinate is bound by residues 243–245 (HPE) and T260. C303 is a [4Fe-4S] cluster binding site.

It belongs to the quinolinate synthase family. Type 2 subfamily. [4Fe-4S] cluster is required as a cofactor.

The protein localises to the cytoplasm. The catalysed reaction is iminosuccinate + dihydroxyacetone phosphate = quinolinate + phosphate + 2 H2O + H(+). Its pathway is cofactor biosynthesis; NAD(+) biosynthesis; quinolinate from iminoaspartate: step 1/1. Functionally, catalyzes the condensation of iminoaspartate with dihydroxyacetone phosphate to form quinolinate. The polypeptide is Quinolinate synthase (Agrobacterium fabrum (strain C58 / ATCC 33970) (Agrobacterium tumefaciens (strain C58))).